Consider the following 239-residue polypeptide: Peroxygenase (239 aa).

Gly2 is modified (N-acetylglycine). One can recognise an EF-hand domain in the interval 60–95 (HNMSVLQQRAAFFDRNNDGIVYPWETYQGFRAVGFG). Residues Asp73, Asn75, Asp77, and Glu84 each coordinate Ca(2+). Positions 116–125 (PSWIPSPVLS) match the Proline-knot motif.

This sequence belongs to the caleosin family. Homodimer. Heme b is required as a cofactor. The cofactor is Ca(2+). As to expression, expressed in pollen (at protein level). Not expressed in leaf, root, stem, tepal, ovary, style, filament or stigma (at protein level).

It is found in the lipid droplet. Its subcellular location is the microsome membrane. The enzyme catalyses RH + ROOH = ROH + ROH.. Functionally, calcium-binding peroxygenase involved in the degradation of storage lipid in oil bodies. The chain is Peroxygenase from Lilium longiflorum (Trumpet lily).